Reading from the N-terminus, the 303-residue chain is Glutathione transport system permease protein GsiD (303 aa).

6 helical membrane-spanning segments follow: residues 40-60 (AMTAALFVILLIVVAIFARWI), 105-125 (LAAGVFAVFIGVAIGTLLGLL), 144-164 (LFAFPGILLAIAVVAVLGSGI), 165-185 (ANVIIAVAIFSIPAFARLVRG), 222-242 (IVVFFTMRIGTSIISAASLSF), and 266-286 (VIAPHVAVFPALAIFLTVLAF). The ABC transmembrane type-1 domain occupies 101-290 (AQISLAAGVF…LTVLAFNLLG (190 aa)).

This sequence belongs to the binding-protein-dependent transport system permease family. The complex is composed of two ATP-binding proteins (GsiA), two transmembrane proteins (GsiC and GsiD) and a solute-binding protein (GsiB).

The protein resides in the cell inner membrane. Its function is as follows. Part of the ABC transporter complex GsiABCD involved in glutathione import. Probably responsible for the translocation of the substrate across the membrane. This chain is Glutathione transport system permease protein GsiD, found in Shigella flexneri serotype 5b (strain 8401).